The following is a 268-amino-acid chain: MTLLNISGLSHHYAHGGFNGKHQHQAVLNNVSLTLKSGETVALLGRSGCGKSTLARLLVGLESPAQGNISWRGEPLAKLNRAQRKAFRRDIQMVFQDSISAVNPRKTVREILREPMRHLLSLKKSEQLARASEMLKAVDLDDSVLDKRPPQLSGGQLQRVCLARALAVEPKLLILDEAVSNLDLVLQAGVIRLLKKLQQQFGTACLFITHDLRLVERFCQRVMVMDNGQIVETQVVGEKLTFSSDAGRVLQNAVLPAFPVRRRTTEKV.

Residues 4–252 (LNISGLSHHY…SSDAGRVLQN (249 aa)) form the ABC transporter domain. ATP is bound at residue 45 to 52 (GRSGCGKS).

Belongs to the ABC transporter superfamily. Nickel importer (TC 3.A.1.5.3) family. The complex is composed of two ATP-binding proteins (NikD and NikE), two transmembrane proteins (NikB and NikC) and a solute-binding protein (NikA).

Its subcellular location is the cell inner membrane. The enzyme catalyses Ni(2+)(out) + ATP + H2O = Ni(2+)(in) + ADP + phosphate + H(+). Functionally, part of the ABC transporter complex NikABCDE involved in nickel import. Responsible for energy coupling to the transport system. The polypeptide is Nickel import ATP-binding protein NikE (Escherichia coli (strain K12)).